A 250-amino-acid polypeptide reads, in one-letter code: Recombination protein RecR (250 aa).

A C4-type zinc finger spans residues 56–71 (CRICHNISQEDVCRIC). In terms of domain architecture, Toprim spans 79–227 (SIICVVEESK…TVTRLASGIP (149 aa)). The tract at residues 148–172 (LGDADTPADGESSGADAAETGNAKT) is disordered.

It belongs to the RecR family.

Its function is as follows. May play a role in DNA repair. It seems to be involved in an RecBC-independent recombinational process of DNA repair. It may act with RecF and RecO. The chain is Recombination protein RecR from Corynebacterium jeikeium (strain K411).